Reading from the N-terminus, the 336-residue chain is MSEMRTLGEFIVEKQSDFPHASGDLSSLLSSIRLAAKIVNREINKAGLVDITGAVGTDNVQGEEQQKLDLYANDKFKAALEARDQVCGVASEEEDEAVAFNKELNKNAKYVVLMDPLDGSSNIDVNVSVGTIFSIYRRVSPVGTPPTQEDFLQPGHKQVAAGYVIYGSSTMLVYTTGAGVNGFTYDPSLGTFCLSHENMMIPDEGKIYSINEGNYIRFPTGVKKYIKYCQENEPSDNRPYTSRYIGSLVSDFHRNLLKGGIYLYPSTQSHPQGKLRLLYECNPIAFIMEQAGGIASDGAQRIMDIKPTELHQRVPFFVGSKNMVKKVEEFLELNRD.

Positions 92, 115, 117, and 118 each coordinate Mg(2+). Substrate contacts are provided by residues 118–121 (DGSS), asparagine 211, tyrosine 244, 262–264 (YLY), and lysine 274. Glutamate 280 provides a ligand contact to Mg(2+).

The protein belongs to the FBPase class 1 family. In terms of assembly, homotetramer. It depends on Mg(2+) as a cofactor.

The protein resides in the cytoplasm. The catalysed reaction is beta-D-fructose 1,6-bisphosphate + H2O = beta-D-fructose 6-phosphate + phosphate. The protein operates within carbohydrate biosynthesis; gluconeogenesis. This chain is Fructose-1,6-bisphosphatase class 1, found in Vibrio atlanticus (strain LGP32) (Vibrio splendidus (strain Mel32)).